Consider the following 159-residue polypeptide: MPLTTNLVGMHYRYPDHYEVEREKIREYAVAVQNDDAWYFEEKAASELGYKGLLAPLTFVCVFGYMAQSSFFKHANIAVKDAQIVQVDQVLKFYAPLVAGDKLYCDVYVDSVRVSHGTQIIVTKNVITNEAGDVVQETYTTLAGRAGEDGEEGFTDATA.

It belongs to the UPF0336 family.

The protein is UPF0336 protein MAP_4107 of Mycolicibacterium paratuberculosis (strain ATCC BAA-968 / K-10) (Mycobacterium paratuberculosis).